A 303-amino-acid chain; its full sequence is Glycine--tRNA ligase alpha subunit (303 aa).

Belongs to the class-II aminoacyl-tRNA synthetase family. As to quaternary structure, tetramer of two alpha and two beta subunits.

The protein localises to the cytoplasm. It catalyses the reaction tRNA(Gly) + glycine + ATP = glycyl-tRNA(Gly) + AMP + diphosphate. This chain is Glycine--tRNA ligase alpha subunit (glyQ), found in Helicobacter pylori (strain ATCC 700392 / 26695) (Campylobacter pylori).